The chain runs to 616 residues: ATP-dependent zinc metalloprotease FtsH (616 aa).

The Cytoplasmic portion of the chain corresponds to 1-8; sequence MRNLFKTA. A helical membrane pass occupies residues 9–29; sequence TIYILIALVILLLVDIFSGGL. The Extracellular segment spans residues 30-114; sequence SYNQFFSNLS…VTKEPPQVPW (85 aa). Residues 115-135 traverse the membrane as a helical segment; the sequence is WLSTFLPMLIFAGLMIFVWIF. Topologically, residues 136–616 are cytoplasmic; the sequence is MLQQTQGGGS…VFEDAQPQLV (481 aa). An ATP-binding site is contributed by 208 to 215; it reads GPPGTGKT. A Zn(2+)-binding site is contributed by H430. Residue E431 is part of the active site. Positions 434 and 506 each coordinate Zn(2+).

It in the central section; belongs to the AAA ATPase family. In the C-terminal section; belongs to the peptidase M41 family. In terms of assembly, homohexamer. The cofactor is Zn(2+).

The protein localises to the cell membrane. Its function is as follows. Acts as a processive, ATP-dependent zinc metallopeptidase for both cytoplasmic and membrane proteins. Plays a role in the quality control of integral membrane proteins. The polypeptide is ATP-dependent zinc metalloprotease FtsH (Caldicellulosiruptor bescii (strain ATCC BAA-1888 / DSM 6725 / KCTC 15123 / Z-1320) (Anaerocellum thermophilum)).